The sequence spans 33 residues: Photosystem II reaction center protein Psb30 (33 aa).

A helical transmembrane segment spans residues 5 to 25; it reads LIAQLTFLTSIIVSGPLVIAL.

This sequence belongs to the Psb30/Ycf12 family. PSII is composed of 1 copy each of membrane proteins PsbA, PsbB, PsbC, PsbD, PsbE, PsbF, PsbH, PsbI, PsbJ, PsbK, PsbL, PsbM, PsbT, PsbX, PsbY, PsbZ, Psb30/Ycf12, peripheral proteins of the oxygen-evolving complex and a large number of cofactors. It forms dimeric complexes.

The protein localises to the plastid. Its subcellular location is the chloroplast thylakoid membrane. Functionally, a core subunit of photosystem II (PSII), probably helps stabilize the reaction center. The protein is Photosystem II reaction center protein Psb30 of Psilotum nudum (Whisk fern).